The following is a 402-amino-acid chain: Olfactomedin-like protein 1 (402 aa).

The first 28 residues, 1–28 (MMVALRGASALLVLFLAAFLPPPQCTQD), serve as a signal peptide directing secretion. Asn-66 is a glycosylation site (N-linked (GlcNAc...) asparagine). The stretch at 79 to 133 (SEYKSAVGNLALRVERAQREIDYIQYLREADECIESEDKTLAEMLLQEAEEEKKI) forms a coiled coil. N-linked (GlcNAc...) asparagine glycosylation is found at Asn-138 and Asn-183. An Olfactomedin-like domain is found at 140–397 (SCDNMLMGIK…QIIYKLQTKR (258 aa)). Cys-141 and Cys-324 form a disulfide bridge.

Post-translationally, highly N-glycosylated. Mainly expressed in the small intestine, liver, lung and heart.

It localises to the secreted. The sequence is that of Olfactomedin-like protein 1 (OLFML1) from Homo sapiens (Human).